The primary structure comprises 805 residues: Leucine--tRNA ligase (805 aa).

Residues proline 41 to histidine 52 carry the 'HIGH' region motif. Positions lysine 577–serine 581 match the 'KMSKS' region motif. Position 580 (lysine 580) interacts with ATP.

The protein belongs to the class-I aminoacyl-tRNA synthetase family.

It is found in the cytoplasm. The enzyme catalyses tRNA(Leu) + L-leucine + ATP = L-leucyl-tRNA(Leu) + AMP + diphosphate. This Staphylococcus aureus (strain JH1) protein is Leucine--tRNA ligase.